Here is an 85-residue protein sequence, read N- to C-terminus: Neutrophil elastase 2A (85 aa).

One can recognise a Peptidase S1 domain in the interval 1 to 85; it reads IVGGRAAEPH…VAQGVFSFVR (85 aa). The Charge relay system role is filled by S67.

Belongs to the peptidase S1 family. Elastase subfamily.

In terms of biological role, may be involved in the degradation of connective tissue in chronic lung disease. This chain is Neutrophil elastase 2A, found in Equus caballus (Horse).